The following is a 250-amino-acid chain: 5-oxoprolinase subunit A (250 aa).

It belongs to the LamB/PxpA family. In terms of assembly, forms a complex composed of PxpA, PxpB and PxpC.

The catalysed reaction is 5-oxo-L-proline + ATP + 2 H2O = L-glutamate + ADP + phosphate + H(+). Its function is as follows. Catalyzes the cleavage of 5-oxoproline to form L-glutamate coupled to the hydrolysis of ATP to ADP and inorganic phosphate. This is 5-oxoprolinase subunit A from Pseudomonas fluorescens (strain Pf0-1).